The chain runs to 270 residues: Type III pantothenate kinase (270 aa).

Residue 11 to 18 (DAGNSRIK) coordinates ATP. Residues Tyr-96 and 103-106 (GSDR) each bind substrate. Catalysis depends on Asp-105, which acts as the Proton acceptor. Thr-129 provides a ligand contact to ATP. Residue Thr-195 participates in substrate binding.

The protein belongs to the type III pantothenate kinase family. As to quaternary structure, homodimer. The cofactor is NH4(+). It depends on K(+) as a cofactor.

The protein localises to the cytoplasm. The catalysed reaction is (R)-pantothenate + ATP = (R)-4'-phosphopantothenate + ADP + H(+). It functions in the pathway cofactor biosynthesis; coenzyme A biosynthesis; CoA from (R)-pantothenate: step 1/5. Its function is as follows. Catalyzes the phosphorylation of pantothenate (Pan), the first step in CoA biosynthesis. In Paraburkholderia phytofirmans (strain DSM 17436 / LMG 22146 / PsJN) (Burkholderia phytofirmans), this protein is Type III pantothenate kinase.